The following is a 604-amino-acid chain: Glutamine--fructose-6-phosphate aminotransferase [isomerizing] (604 aa).

Cys-2 serves as the catalytic Nucleophile; for GATase activity. The Glutamine amidotransferase type-2 domain occupies 2-219; sequence CGIMGAVSER…EGDSACVTTQ (218 aa). 2 SIS domains span residues 279 to 427 and 454 to 594; these read LRAS…DNRA and LASL…VDQP. The active-site For Fru-6P isomerization activity is Lys-599.

In terms of assembly, homodimer.

It localises to the cytoplasm. The catalysed reaction is D-fructose 6-phosphate + L-glutamine = D-glucosamine 6-phosphate + L-glutamate. Its function is as follows. Catalyzes the first step in hexosamine metabolism, converting fructose-6P into glucosamine-6P using glutamine as a nitrogen source. This Legionella pneumophila (strain Paris) protein is Glutamine--fructose-6-phosphate aminotransferase [isomerizing].